Here is a 1606-residue protein sequence, read N- to C-terminus: MFPKSNLTVTCWVWRSMRKLFLLLSLLLSHAAHLEGKKDNQFIWKPGPWGRCTGDCGPGGVQSRAVWCFHVDGWTSHLSNCGESNRPPKERSCFRVCDWHSDLFQWEVSDWHHCVLVPYARGEVKPRTAECVTAQHGLQHRMVRCIQKLNRTVVANEICEHFALQPPTEQACLIPCPRDCVVSEFLPWSNCSKGCGKKLQHRTRAVIAPPLFGGLQCPNLTESRACDAPISCPLGEEEYTFSLKVGPWSKCRLPHLKEINPSGRTVLDFNSDSNERVTFKHQSYKAHHHSKSWAIEIGYQTRQVSCTRSDGQNAMLSLCLQDSFPLTVQSCIMPKDCETSQWSSWSPCSKTCRSGSLLPGFRSRSRNVKHMAIGGGKECPELLEKEACIVEGELLQQCPRYSWRTSEWKECQVSLLLEQQDPHWHVTGPVCGGGIQTREVYCAQSVPAAAALRAKEVSRPVEKALCVGPAPLPSQLCNIPCSTDCIVSSWSAWGLCIHENCHDPQGKKGFRTRQRHVLMESTGPAGHCPHLVESVPCEDPMCYRWLASEGICFPDHGKCGLGHRILKAVCQNDRGEDVSGSLCPVPPPPERKSCEIPCRMDCVLSEWTEWSSCSQSCSNKNSDGKQTRSRTILALAGEGGKPCPPSQALQEHRLCNDHSCMQLHWETSPWGPCSEDTLVTALNATIGWNGEATCGVGIQTRRVFCVKSHVGQVMTKRCPDSTRPETVRPCFLPCKKDCIVTAFSEWTPCPRMCQAGNATVKQSRYRIIIQEAANGGQECPDTLYEERECEDVSLCPVYRWKPQKWSPCILVPESVWQGITGSSEACGKGLQTRAVSCISDDNRSAEMMECLKQTNGMPLLVQECTVPCREDCTFTAWSKFTPCSTNCEATKSRRRQLTGKSRKKEKCQDSDLYPLVETELCPCDEFISQPYGNWSDCILPEGRREPHRGLRVQADSKECGEGLRFRAVACSDKNGRPVDPSFCSSSGYIQEKCVIPCPFDCKLSDWSSWGSCSSSCGIGVRIRSKWLKEKPYNGGRPCPKLDLKNQVHEAVPCYSECNQYSWVVEHWSSCKINNELRSLRCGGGTQSRKIRCVNTADGEGGAVDSNLCNQDEIPPETQSCSLMCPNECVMSEWGLWSKCPQSCDPHTMQRRTRHLLRPSLNSRTCAEDSQVQPCLLNENCFQFQYNLTEWSTCQLSENAPCGQGVRTRLLSCVCSDGKPVSMDQCEQHNLEKPQRMSIPCLVECVVNCQLSGWTAWTECSQTCGHGGRMSRTRFIIMPTQGEGRPCPTELTQEKTCPVTPCYSWVLGNWSACKLEGGDCGEGVQIRSLSCMVHSGSISHAAGRVEDALCGEMPFQDSILKQLCSVPCPGDCHLTEWSEWSTCELTCIDGRSFETVGRQSRSRTFIIQSFENQDSCPQQVLETRPCTGGKCYHYTWKASLWNNNERTVWCQRSDGVNVTGGCSPQARPAAIRQCIPACRKPFSYCTQGGVCGCEKGYTEIMKSNGFLDYCMKVPGSEDKKADVKNLSGKNRPVNSKIHDIFKGWSLQPLDPDGRVKIWVYGVSGGAFLIMIFLIFTSYLVCKKPKPHQSTPPQQKPLTLAYDGDLDM.

The first 31 residues, 1–31 (MFPKSNLTVTCWVWRSMRKLFLLLSLLLSHA), serve as a signal peptide directing secretion. Residues 32–1555 (AHLEGKKDNQ…QPLDPDGRVK (1524 aa)) are Extracellular-facing. TSP type-1 domains lie at 40 to 98 (NQFI…RVCD), 102 to 177 (DLFQ…IPCP), 179 to 233 (DCVV…ISCP), 336 to 392 (DCET…IVEG), 399 to 482 (PRYS…IPCS), 484 to 543 (DCIV…PMCY), 601 to 661 (DCVL…HSCM), 662 to 735 (QLHW…LPCK), 737 to 796 (DCIV…SLCP), 797 to 869 (VYRW…VPCR), 871 to 924 (DCTF…CPCD), 925 to 998 (EFIS…IPCP), 1000 to 1125 (DCKL…LMCP), 1127 to 1181 (ECVM…ENCF), 1182 to 1245 (QFQY…VECV), 1247 to 1302 (NCQL…TPCY), 1303 to 1368 (SWVL…VPCP), and 1370 to 1431 (DCHL…GKCY). N-linked (GlcNAc...) asparagine glycans are attached at residues asparagine 150, asparagine 190, and asparagine 219. Intrachain disulfides connect cysteine 411–cysteine 477, cysteine 431–cysteine 481, and cysteine 442–cysteine 466. 3 disulfide bridges follow: cysteine 602–cysteine 643, cysteine 613–cysteine 617, and cysteine 655–cysteine 660. A glycan (N-linked (GlcNAc...) asparagine) is linked at asparagine 683. 3 disulfide bridges follow: cysteine 738/cysteine 779, cysteine 749/cysteine 753, and cysteine 789/cysteine 795. N-linked (GlcNAc...) asparagine glycosylation occurs at asparagine 757. Asparagine 842 carries N-linked (GlcNAc...) asparagine glycosylation. 3 cysteine pairs are disulfide-bonded: cysteine 872-cysteine 907, cysteine 883-cysteine 887, and cysteine 921-cysteine 923. N-linked (GlcNAc...) asparagine glycosylation occurs at asparagine 933. Intrachain disulfides connect cysteine 937–cysteine 993, cysteine 959–cysteine 997, cysteine 970–cysteine 983, cysteine 1001–cysteine 1038, cysteine 1012–cysteine 1016, and cysteine 1120–cysteine 1124. Asparagine 1186 carries N-linked (GlcNAc...) asparagine glycosylation. 3 disulfide bridges follow: cysteine 1248–cysteine 1286, cysteine 1259–cysteine 1263, and cysteine 1296–cysteine 1301. Asparagine 1308 is a glycosylation site (N-linked (GlcNAc...) asparagine). Intrachain disulfides connect cysteine 1371–cysteine 1415, cysteine 1382–cysteine 1386, and cysteine 1425–cysteine 1430. Asparagine 1456 and asparagine 1524 each carry an N-linked (GlcNAc...) asparagine glycan. Residues 1556 to 1576 (IWVYGVSGGAFLIMIFLIFTS) form a helical membrane-spanning segment. Residues 1577–1606 (YLVCKKPKPHQSTPPQQKPLTLAYDGDLDM) are Cytoplasmic-facing. Residues 1583 to 1606 (PKPHQSTPPQQKPLTLAYDGDLDM) are disordered. Over residues 1586–1595 (HQSTPPQQKP) the composition is skewed to polar residues.

It localises to the membrane. This is Thrombospondin type-1 domain-containing protein 7B from Homo sapiens (Human).